The chain runs to 350 residues: Phenylalanine--tRNA ligase alpha subunit (350 aa).

A Mg(2+)-binding site is contributed by glutamate 260.

Belongs to the class-II aminoacyl-tRNA synthetase family. Phe-tRNA synthetase alpha subunit type 1 subfamily. Tetramer of two alpha and two beta subunits. Mg(2+) is required as a cofactor.

It localises to the cytoplasm. It carries out the reaction tRNA(Phe) + L-phenylalanine + ATP = L-phenylalanyl-tRNA(Phe) + AMP + diphosphate + H(+). The sequence is that of Phenylalanine--tRNA ligase alpha subunit from Mesoplasma florum (strain ATCC 33453 / NBRC 100688 / NCTC 11704 / L1) (Acholeplasma florum).